The following is a 68-amino-acid chain: Large ribosomal subunit protein bL35 (68 aa).

This sequence belongs to the bacterial ribosomal protein bL35 family.

The sequence is that of Large ribosomal subunit protein bL35 from Orientia tsutsugamushi (strain Boryong) (Rickettsia tsutsugamushi).